The chain runs to 504 residues: Anaerobic nitric oxide reductase transcription regulator NorR (504 aa).

Asp57 carries the 4-aspartylphosphate modification. The Sigma-54 factor interaction domain occupies 187–416 (MIGLSPGMTQ…LEHAIHRAVV (230 aa)). ATP contacts are provided by residues 215–222 (GETGTGKE) and 278–287 (ADNGTLFLDE). Positions 479–498 (WAACARMLETDVANLHRLAK) form a DNA-binding region, H-T-H motif.

It functions in the pathway nitrogen metabolism; nitric oxide reduction. In terms of biological role, required for the expression of anaerobic nitric oxide (NO) reductase, acts as a transcriptional activator for at least the norVW operon. Activation also requires sigma-54. This is Anaerobic nitric oxide reductase transcription regulator NorR from Escherichia coli (strain 55989 / EAEC).